The following is a 359-amino-acid chain: Non-functional pseudokinase ZRK2 (359 aa).

Positions 1–10 (MKSMVKKLKQ) are enriched in basic residues. Residues 1 to 20 (MKSMVKKLKQSLRSGSLEKR) are disordered. The Protein kinase domain maps to 64–356 (LKATSNFGSS…KELKQIETLF (293 aa)). ATP is bound by residues 70–78 (FGSSCFVTA) and K97.

It belongs to the protein kinase superfamily. Ser/Thr protein kinase family. ZRK subfamily.

The protein is Non-functional pseudokinase ZRK2 of Arabidopsis thaliana (Mouse-ear cress).